Consider the following 615-residue polypeptide: Dolichyl-diphosphooligosaccharide--protein glycosyltransferase subunit 1A (615 aa).

The first 28 residues, 1–28, serve as a signal peptide directing secretion; that stretch reads MATPPPLRRVAALLLLLVAAASTPTARA. At 29 to 437 the chain is on the lumenal side; that stretch reads DLVVTRADRK…RFNNISLLRE (409 aa). An N6-acetyllysine modification is found at Lys187. 3 N-linked (GlcNAc...) asparagine glycosylation sites follow: Asn300, Asn353, and Asn431. Residues 438-455 traverse the membrane as a helical segment; it reads PMMLITGFFLLFMACIVY. The Cytoplasmic segment spans residues 456–615; that stretch reads MRTDMSISKN…ESLLEYISEI (160 aa).

Belongs to the OST1 family. Component of the oligosaccharyltransferase (OST) complex.

The protein localises to the endoplasmic reticulum membrane. Its pathway is protein modification; protein glycosylation. In terms of biological role, subunit of the oligosaccharyl transferase (OST) complex that catalyzes the initial transfer of a defined glycan (Glc(3)Man(9)GlcNAc(2) in eukaryotes) from the lipid carrier dolichol-pyrophosphate to an asparagine residue within an Asn-X-Ser/Thr consensus motif in nascent polypeptide chains, the first step in protein N-glycosylation. N-glycosylation occurs cotranslationally and the complex associates with the Sec61 complex at the channel-forming translocon complex that mediates protein translocation across the endoplasmic reticulum (ER). All subunits are required for a maximal enzyme activity. This Oryza sativa subsp. japonica (Rice) protein is Dolichyl-diphosphooligosaccharide--protein glycosyltransferase subunit 1A (OST1A).